We begin with the raw amino-acid sequence, 383 residues long: Serine protease 23 (383 aa).

The signal sequence occupies residues 1–19 (MAGIPGLLFLLFLLLCAVG). Asn-93 carries an N-linked (GlcNAc...) asparagine glycan. The interval 108–127 (SSGGGAQHRDSGSSGKSRRK) is disordered. Position 109 is a phosphoserine; by FAM20C (Ser-109). Cys-160 and Cys-176 are oxidised to a cystine. The Charge relay system role is filled by His-175. Asn-207 is a glycosylation site (N-linked (GlcNAc...) asparagine). Active-site charge relay system residues include Asp-240 and Ser-316.

It belongs to the peptidase S1 family.

Its subcellular location is the secreted. This Macaca mulatta (Rhesus macaque) protein is Serine protease 23 (PRSS23).